The primary structure comprises 353 residues: Photosystem II D2 protein (353 aa).

Thr-2 carries the post-translational modification N-acetylthreonine. Thr-2 carries the post-translational modification Phosphothreonine. The chain crosses the membrane as a helical span at residues 41 to 61 (CAYFALGGWFTGTTFVTSWYT). His-118 provides a ligand contact to chlorophyll a. Residues 125–141 (GFMLRQFELARSVQLRP) form a helical membrane-spanning segment. Pheophytin a-binding residues include Gln-130 and Asn-143. The helical transmembrane segment at 153–166 (VFVSVFLIYPLGQS) threads the bilayer. His-198 serves as a coordination point for chlorophyll a. Residues 208 to 228 (AALLCAIHGATVENTLFEDGD) traverse the membrane as a helical segment. A plastoquinone is bound by residues His-215 and Phe-262. A Fe cation-binding site is contributed by His-215. His-269 serves as a coordination point for Fe cation. A helical membrane pass occupies residues 279–295 (GSWMSAIGVVGLALNLR).

Belongs to the reaction center PufL/M/PsbA/D family. As to quaternary structure, PSII is composed of 1 copy each of membrane proteins PsbA, PsbB, PsbC, PsbD, PsbE, PsbF, PsbH, PsbI, PsbJ, PsbK, PsbL, PsbM, PsbT, PsbX, PsbY, PsbZ, Psb30/Ycf12, at least 3 peripheral proteins of the oxygen-evolving complex and a large number of cofactors. It forms dimeric complexes. The cofactor is The D1/D2 heterodimer binds P680, chlorophylls that are the primary electron donor of PSII, and subsequent electron acceptors. It shares a non-heme iron and each subunit binds pheophytin, quinone, additional chlorophylls, carotenoids and lipids. There is also a Cl(-1) ion associated with D1 and D2, which is required for oxygen evolution. The PSII complex binds additional chlorophylls, carotenoids and specific lipids..

The protein resides in the plastid. Its subcellular location is the chloroplast thylakoid membrane. The catalysed reaction is 2 a plastoquinone + 4 hnu + 2 H2O = 2 a plastoquinol + O2. Photosystem II (PSII) is a light-driven water:plastoquinone oxidoreductase that uses light energy to abstract electrons from H(2)O, generating O(2) and a proton gradient subsequently used for ATP formation. It consists of a core antenna complex that captures photons, and an electron transfer chain that converts photonic excitation into a charge separation. The D1/D2 (PsbA/PsbD) reaction center heterodimer binds P680, the primary electron donor of PSII as well as several subsequent electron acceptors. D2 is needed for assembly of a stable PSII complex. The sequence is that of Photosystem II D2 protein from Pinus koraiensis (Korean pine).